Consider the following 322-residue polypeptide: Cysteine protease YopT (322 aa).

Residues 43 to 72 form a disordered region; sequence SHSNRQKKLSATIKHNQSSRSMLDRKLTSD. Catalysis depends on residues cysteine 139, histidine 258, and aspartate 274.

It belongs to the peptidase C58 family. In terms of assembly, interacts with human ARHA.

Its subcellular location is the secreted. In terms of biological role, cysteine protease, which is translocated into infected cells and plays a central role in pathogenesis by cleaving the C-terminus end of the human small GTPase RhoA/ARHA, a regulator of cytoskeleton. Once cleaved, ARHA loses its lipid modification, and is released from the cell membrane, leading to the subsequent disruption of actin cytoskeleton of the host cell. In Yersinia enterocolitica, this protein is Cysteine protease YopT (yopT).